A 641-amino-acid chain; its full sequence is MESSRTAATSTNGTEKSRRRNTDYLQIDPSSTFINNTGRGFAEELPENFLDTISPHPITPSASTSSATSATEEPATSSAPQLASLAPMSMSSEQPSSSFSSASLLSSSYETIKNEPEFSGSTAGLLSPLHVDSRRRESHDFNTSPYIKEEEDLDGSHLLMGGIRPDTPTNDRSTDLGSISSLLNEDHHTNTIGQSPSPRSTFGSDPTPMIQRQLIKNEDGVSPGSMGFSKNHQGYQKPRNGDRMEYEKAPYQRNSRKQKKPLGLLNQALSSVISTPTISSSNIPTPPSAHIAQPRRIYSTQDSNDPLNAEIGDDIYIDTKDLCKRIAFELKNHSIPQAIFAERILCRSQGTLSDLLRNPKPWNKLKSGRETFRRMYNWVAQPLATRLAILDMKTEDVNRASGMSPPTPAQNVRTHRRSTSDHDGPVSKRPRLVFTDIQKRTLQAIFKETQRPSREMQQTIAEHLRLDLSTVANFFMNARRRSRLGGNIDEPTPFQQVKNISPPPVGDTSDALLNGDDHVPLLNTVMAEMYKEGAIATSNHSAEQREMIERGFGVSIPGPSHSGELLNGDSHEDDEELDELNDSELAYEEDVEIGDEEEEDEEQANGDILPTPKVEELEEKTVIKEEAPDDGEYGATKLAAN.

Composition is skewed to polar residues over residues 1–14 (MESS…TNGT) and 28–38 (DPSSTFINNTG). Disordered regions lie at residues 1 to 79 (MESS…TSSA) and 129 to 244 (LHVD…GDRM). Positions 52-79 (TISPHPITPSASTSSATSATEEPATSSA) are enriched in low complexity. Over residues 131-140 (VDSRRRESHD) the composition is skewed to basic and acidic residues. 2 stretches are compositionally biased toward polar residues: residues 167–183 (TPTN…SSLL) and 190–204 (NTIG…TFGS). The CUT DNA-binding region spans 308-394 (NAEIGDDIYI…TRLAILDMKT (87 aa)). Disordered stretches follow at residues 398 to 428 (NRAS…PVSK), 485 to 508 (GGNI…VGDT), and 552 to 641 (FGVS…LAAN). Residues 427–486 (SKRPRLVFTDIQKRTLQAIFKETQRPSREMQQTIAEHLRLDLSTVANFFMNARRRSRLGG) constitute a DNA-binding region (homeobox). Residues 571 to 604 (HEDDEELDELNDSELAYEEDVEIGDEEEEDEEQA) show a composition bias toward acidic residues. Over residues 613–626 (KVEELEEKTVIKEE) the composition is skewed to basic and acidic residues.

It belongs to the CUT homeobox family. In terms of tissue distribution, expressed in the embryo. After gastrulation, expressed in almost all cells. During larval and adult stages, expressed in the dorsal and ventral nerve cord, head and tail neurons, pharynx, gut and head.

It localises to the nucleus. In terms of biological role, probable DNA-binding regulatory protein involved in cell-fate specification. The protein is Homeobox protein ceh-38 (ceh-38) of Caenorhabditis elegans.